The sequence spans 482 residues: MNRYPLKALESELEKKHMLICIDSRKVEKGCVFVALPGSSVDGGLFIPDAVSRGAAYIVCRHNEVEYCGSAIPIVVDDPRYTLGRLARIFYNTGNLSMPIIGVTGTNGKTTITYLLEYLFRAKGNRTGVIGTIAYRWPGFSKEAPLTTPQCLDLHAMLAQMQVDKTEIVFMEVSSHALDQRRIAGISFKGVIFTNLTQDHLDYHKDMKEYFHAKARLFFEYPSKNKIMVASMDNQWGRKLAKLVPEIIGFGFKNKPTQVSNYLFGKILSSSRAGLHLQMSFKDKVWELCTPLVGVHNAENLLAVQAISLQLGLAPEDFCCFEKFTGVPGRLERIVNKKQLDIFVDYAHTPDALINVLSALRDVGFKRIITVFGCGGNRDKAKRPLMGKAVAKLSDVAVLTSDNPRNEDPELIMADVLPGLKKAKQIITEPDREKAIRQAIELVSPGDALLVAGKGHECTQQIGFMKYPFSDQSVIRKILGCD.

S24 provides a ligand contact to UDP-N-acetyl-alpha-D-muramoyl-L-alanyl-D-glutamate. 105–111 lines the ATP pocket; that stretch reads GTNGKTT. UDP-N-acetyl-alpha-D-muramoyl-L-alanyl-D-glutamate contacts are provided by residues 147-148, S174, Q180, and R182; that span reads TT. At K214 the chain carries N6-carboxylysine. Meso-2,6-diaminopimelate-binding positions include R378, 402–405, G453, and E457; that span reads DNPR. The Meso-diaminopimelate recognition motif motif lies at 402–405; the sequence is DNPR.

The protein belongs to the MurCDEF family. MurE subfamily. Mg(2+) serves as cofactor. In terms of processing, carboxylation is probably crucial for Mg(2+) binding and, consequently, for the gamma-phosphate positioning of ATP.

The protein localises to the cytoplasm. It carries out the reaction UDP-N-acetyl-alpha-D-muramoyl-L-alanyl-D-glutamate + meso-2,6-diaminopimelate + ATP = UDP-N-acetyl-alpha-D-muramoyl-L-alanyl-gamma-D-glutamyl-meso-2,6-diaminopimelate + ADP + phosphate + H(+). The protein operates within cell wall biogenesis; peptidoglycan biosynthesis. Functionally, catalyzes the addition of meso-diaminopimelic acid to the nucleotide precursor UDP-N-acetylmuramoyl-L-alanyl-D-glutamate (UMAG) in the biosynthesis of bacterial cell-wall peptidoglycan. The protein is UDP-N-acetylmuramoyl-L-alanyl-D-glutamate--2,6-diaminopimelate ligase of Lawsonia intracellularis (strain PHE/MN1-00).